The chain runs to 384 residues: MLWSIMSKPLDLNQLAQNIKQWGLELGFQQVGITDTDLRASEPALQAWLDKQYHGEMAWMARHGMMRARPHELLPGTLRVISVRMNYLPANAAFASTLKDPTLGYVSRYALGRDYHKLLRSRLKKLGEQIQQYCGSLNFRPFVDSAPILERPLAEKAGLGWTGKHSLILNREAGSFFFLGELLIDLPLPVDQPVEEGCGKCVACMTICPTGAIVEPYTVDARRCISYLTIELEGAIPEAFRPLIGNRIYGCDDCQLICPWNRYSQLTDEADFSPRKALHNPDLLELFSWSEAQFLKVTEGSAIRRIGHLRWLRNVAVALGNAPWSNAVITALESRKGEHPLLDEHIEWAIAQQIEKRNACIIEVQLPKKQRLVRVIEKGLVRDA.

Aspartate 144 serves as the catalytic Proton donor. Residues leucine 186–threonine 218 enclose the 4Fe-4S ferredoxin-type domain. The [4Fe-4S] cluster site is built by cysteine 198, cysteine 201, cysteine 204, cysteine 208, cysteine 224, cysteine 251, cysteine 254, and cysteine 258.

It belongs to the QueG family. Monomer. It depends on cob(II)alamin as a cofactor. [4Fe-4S] cluster is required as a cofactor.

It localises to the cytoplasm. The enzyme catalyses epoxyqueuosine(34) in tRNA + AH2 = queuosine(34) in tRNA + A + H2O. Its pathway is tRNA modification; tRNA-queuosine biosynthesis. Catalyzes the conversion of epoxyqueuosine (oQ) to queuosine (Q), which is a hypermodified base found in the wobble positions of tRNA(Asp), tRNA(Asn), tRNA(His) and tRNA(Tyr). The sequence is that of Epoxyqueuosine reductase from Salmonella typhimurium (strain LT2 / SGSC1412 / ATCC 700720).